The sequence spans 235 residues: 6-phosphogluconolactonase (235 aa).

Belongs to the glucosamine/galactosamine-6-phosphate isomerase family. 6-phosphogluconolactonase subfamily.

The enzyme catalyses 6-phospho-D-glucono-1,5-lactone + H2O = 6-phospho-D-gluconate + H(+). The protein operates within carbohydrate degradation; pentose phosphate pathway; D-ribulose 5-phosphate from D-glucose 6-phosphate (oxidative stage): step 2/3. Functionally, hydrolysis of 6-phosphogluconolactone to 6-phosphogluconate. The polypeptide is 6-phosphogluconolactonase (pgl) (Borreliella burgdorferi (strain ATCC 35210 / DSM 4680 / CIP 102532 / B31) (Borrelia burgdorferi)).